Reading from the N-terminus, the 134-residue chain is Small ribosomal subunit protein uS8c (134 aa).

This sequence belongs to the universal ribosomal protein uS8 family. As to quaternary structure, part of the 30S ribosomal subunit.

Its subcellular location is the plastid. Functionally, one of the primary rRNA binding proteins, it binds directly to 16S rRNA central domain where it helps coordinate assembly of the platform of the 30S subunit. The protein is Small ribosomal subunit protein uS8c (rps8) of Cuscuta obtusiflora (Peruvian dodder).